The primary structure comprises 308 residues: Glutaminase (308 aa).

S66, N117, E161, N168, Y192, Y244, and V262 together coordinate substrate.

Belongs to the glutaminase family. As to quaternary structure, homotetramer.

It carries out the reaction L-glutamine + H2O = L-glutamate + NH4(+). This Klebsiella pneumoniae subsp. pneumoniae (strain ATCC 700721 / MGH 78578) protein is Glutaminase.